Here is a 162-residue protein sequence, read N- to C-terminus: NADH-quinone oxidoreductase subunit I (162 aa).

4Fe-4S ferredoxin-type domains are found at residues 53–83 (LRRY…IEAE) and 93–122 (TRYD…ETRI). [4Fe-4S] cluster is bound by residues Cys63, Cys66, Cys69, Cys73, Cys102, Cys105, Cys108, and Cys112.

Belongs to the complex I 23 kDa subunit family. As to quaternary structure, NDH-1 is composed of 14 different subunits. Subunits NuoA, H, J, K, L, M, N constitute the membrane sector of the complex. It depends on [4Fe-4S] cluster as a cofactor.

Its subcellular location is the cell inner membrane. It carries out the reaction a quinone + NADH + 5 H(+)(in) = a quinol + NAD(+) + 4 H(+)(out). Functionally, NDH-1 shuttles electrons from NADH, via FMN and iron-sulfur (Fe-S) centers, to quinones in the respiratory chain. The immediate electron acceptor for the enzyme in this species is believed to be ubiquinone. Couples the redox reaction to proton translocation (for every two electrons transferred, four hydrogen ions are translocated across the cytoplasmic membrane), and thus conserves the redox energy in a proton gradient. The sequence is that of NADH-quinone oxidoreductase subunit I from Dechloromonas aromatica (strain RCB).